Reading from the N-terminus, the 325-residue chain is Casein kinase I isoform alpha (325 aa).

Ala-2 is modified (N-acetylalanine). A Phosphoserine modification is found at Ser-4. Residue Lys-8 is modified to N6-acetyllysine. A Protein kinase domain is found at 17–285 (YKLVRKIGSG…YLRQLFRILF (269 aa)). Residues 23–31 (IGSGSFGDI) and Lys-46 contribute to the ATP site. Asp-136 (proton acceptor) is an active-site residue.

Belongs to the protein kinase superfamily. CK1 Ser/Thr protein kinase family. Casein kinase I subfamily. In terms of assembly, interacts with the Axin complex. Interacts with TUT1, leading to TUT1 phosphorylation. Interacts with FAM83A, FAM83B, FAM83C, FAM83D, FAM83E, FAM83F, FAM83G and FAM83H (via DUF1669). Interaction with FAM83H recruits CSNK1A1 to keratin filaments. Post-translationally, phosphorylated by MTOR in response to mitogenic stimulation, leading to its activation.

It is found in the cytoplasm. It localises to the cytoskeleton. The protein localises to the microtubule organizing center. Its subcellular location is the centrosome. The protein resides in the chromosome. It is found in the centromere. It localises to the kinetochore. The protein localises to the nucleus speckle. Its subcellular location is the cilium basal body. The protein resides in the spindle. The enzyme catalyses L-seryl-[protein] + ATP = O-phospho-L-seryl-[protein] + ADP + H(+). It carries out the reaction L-threonyl-[protein] + ATP = O-phospho-L-threonyl-[protein] + ADP + H(+). Its function is as follows. Casein kinases are operationally defined by their preferential utilization of acidic proteins such as caseins as substrates. Can phosphorylate a large number of proteins. Participates in Wnt signaling. Phosphorylates CTNNB1 at 'Ser-45'. May phosphorylate PER1 and PER2. May play a role in segregating chromosomes during mitosis. May play a role in keratin cytoskeleton disassembly and thereby, it may regulate epithelial cell migration. Acts as a positive regulator of mTORC1 and mTORC2 signaling in response to nutrients by mediating phosphorylation of DEPTOR inhibitor. Acts as an inhibitor of NLRP3 inflammasome assembly by mediating phosphorylation of NLRP3. The polypeptide is Casein kinase I isoform alpha (CSNK1A1) (Oryctolagus cuniculus (Rabbit)).